The chain runs to 300 residues: Recombination-associated protein RdgC (300 aa).

The protein belongs to the RdgC family.

It localises to the cytoplasm. Its subcellular location is the nucleoid. May be involved in recombination. This Herminiimonas arsenicoxydans protein is Recombination-associated protein RdgC.